The following is a 264-amino-acid chain: H-2 class II histocompatibility antigen, E-B beta chain (264 aa).

The N-terminal stretch at 1-26 (MVWLPRVPCVAAVILLLTVLSPPMAL) is a signal peptide. The segment at 27–121 (VRDSRPWFLE…ISDKFLVRRR (95 aa)) is beta-1. At 27–225 (VRDSRPWFLE…KAQSTSAQNK (199 aa)) the chain is on the extracellular side. Disulfide bonds link Cys38–Cys106 and Cys144–Cys200. N-linked (GlcNAc...) asparagine glycosylation occurs at Asn46. Positions 122 to 225 (VEPTVTVYPT…KAQSTSAQNK (104 aa)) are beta-2. One can recognise an Ig-like C1-type domain in the interval 124 to 214 (PTVTVYPTKT…PSLTDPVTVE (91 aa)). Residues 226 to 246 (MLSGVGGFVLGLLFLGAGLFI) form a helical membrane-spanning segment. Residues 247-264 (YFRNQKGQSGLQPTGLLS) are Cytoplasmic-facing.

It belongs to the MHC class II family. Post-translationally, ubiquitinated in immature dendritic cells leading to down-regulation of MHC class II.

The protein resides in the membrane. The polypeptide is H-2 class II histocompatibility antigen, E-B beta chain (H2-Eb1) (Mus musculus (Mouse)).